The primary structure comprises 427 residues: MENGYKTYRDKVIEYLEAHEKWRSSTINLIASENVTSPSVNRAVSSGFMHKYAEGWPRQRYYQGCKYVDEVELIGVDLFCKLFGSDFADLRPISGTNANQAVFFGLTQPGDKAIVLHTSHGGHISHMPFGAAGMRGLEVHTWPFDNEEFNIDVDKAAQLIRELEPRIVVFGGSLFPFPHPVKELAPVAKEVGAYVMYDAAHVLGLIAGKQFQNPLREGVDIMTASTHKTFPGPQGGIILYKNFGDDVAKLQWAIFPGVLSNHHLHHMAGKVITAAEMLEFGERYAAQIVKNAKALAEALAEEGFKVIGEDKDYTESHQVIVDVSDLHEAAGGWAAPLLEEAGIILNKNLLPWDPLEKVNTPSGLRIGVQEMTRVGMLEDNMKDIAVFMRRVLIDKEDPKKVEKEVAEYRKEYQKVYYSFDHGLPMKE.

122–124 (GHI) lines the (6S)-5,6,7,8-tetrahydrofolate pocket. Lys-228 bears the N6-(pyridoxal phosphate)lysine mark.

The protein belongs to the SHMT family. In terms of assembly, homodimer. It depends on pyridoxal 5'-phosphate as a cofactor.

It localises to the cytoplasm. It functions in the pathway amino-acid biosynthesis; glycine biosynthesis; glycine from L-serine: step 1/1. Catalyzes the reversible interconversion of serine and glycine with a modified folate serving as the one-carbon carrier. Also exhibits a pteridine-independent aldolase activity toward beta-hydroxyamino acids, producing glycine and aldehydes, via a retro-aldol mechanism. The protein is Serine hydroxymethyltransferase of Thermococcus onnurineus (strain NA1).